The primary structure comprises 382 residues: Mannitol-1-phosphate 5-dehydrogenase (382 aa).

3 to 14 (ALHFGAGNIGRG) is a binding site for NAD(+).

This sequence belongs to the mannitol dehydrogenase family.

The enzyme catalyses D-mannitol 1-phosphate + NAD(+) = beta-D-fructose 6-phosphate + NADH + H(+). In Salmonella schwarzengrund (strain CVM19633), this protein is Mannitol-1-phosphate 5-dehydrogenase.